Here is a 530-residue protein sequence, read N- to C-terminus: Capsid protein VP1 (530 aa).

Positions 1–20 (MMMASKDATSSVDGASGAGQ) are disordered. The shell domain stretch occupies residues 1–225 (MMMASKDATS…FLFLVPPTVE (225 aa)). A P1 sub-domain 1 region spans residues 226 to 278 (QKTRPFTLPNLPLSSLSNSRAPLPISSMGISPDNVQSVQFQNGRCTLDGRLVG). The protruding domain stretch occupies residues 226-530 (QKTRPFTLPN…SARGRLGLRR (305 aa)). The P2 sub-domain stretch occupies residues 279–405 (TTPVSLSHVA…GSSITEATHL (127 aa)). The P1 sub-domain 2 stretch occupies residues 406–530 (APSVYPPGFG…SARGRLGLRR (125 aa)). The plays a role in binding to host histo-blood group structures antigens and in the formation of P-particles stretch occupies residues 523–530 (RGRLGLRR).

It belongs to the caliciviridae capsid protein family. Homodimer. Homomultimer. Interacts with the minor capsid protein VP2. Interacts (via C-terminus) with host type I histo-blood group structures antigens at the surface of target cells. May be cleaved by host protease to generate soluble capsid protein. Assembled capsid cannot be cleaved.

It is found in the virion. The protein resides in the host cytoplasm. Its function is as follows. Capsid protein self assembles to form an icosahedral capsid with a T=3 symmetry, about 38 nm in diameter, and consisting of 180 capsid proteins. A smaller form of capsid with a diameter of 23 nm might be capsid proteins assembled as icosahedron with T=1 symmetry. The capsid encapsulates the genomic RNA and is decorated with VP2 proteins. Attaches virion to target cells by binding histo-blood group antigens (HBGAs) present on gastroduodenal epithelial cells. In terms of biological role, the soluble capsid protein may play a role in viral immunoevasion. The protein is Capsid protein VP1 of Norovirus (strain Human/NoV/United States/Norwalk/1968/GI) (Hu/NV/NV/1968/US).